Here is an 853-residue protein sequence, read N- to C-terminus: DNA mismatch repair protein MutS (853 aa).

616 to 623 (GPNMGGKS) lines the ATP pocket.

The protein belongs to the DNA mismatch repair MutS family.

Functionally, this protein is involved in the repair of mismatches in DNA. It is possible that it carries out the mismatch recognition step. This protein has a weak ATPase activity. This chain is DNA mismatch repair protein MutS, found in Erwinia tasmaniensis (strain DSM 17950 / CFBP 7177 / CIP 109463 / NCPPB 4357 / Et1/99).